Consider the following 141-residue polypeptide: HTH-type transcriptional repressor NsrR (141 aa).

In terms of domain architecture, HTH rrf2-type spans 2 to 129; the sequence is QLTSFTDYAL…DDCTIEELLS (128 aa). The H-T-H motif DNA-binding region spans 28-51; the sequence is ITEVTDLFGVSRNHMVKVINRLGQ. Residues Cys91, Cys96, and Cys102 each contribute to the [2Fe-2S] cluster site.

[2Fe-2S] cluster serves as cofactor.

Its function is as follows. Nitric oxide-sensitive repressor of genes involved in protecting the cell against nitrosative stress. May require iron for activity. The polypeptide is HTH-type transcriptional repressor NsrR (Vibrio campbellii (strain ATCC BAA-1116)).